The sequence spans 610 residues: Menin (610 aa).

An interaction with FANCD2 region spans residues 214–390 (GVAERSWLYL…SLLEAGEERP (177 aa)). 2 disordered regions span residues 385–404 (AGEE…GSAL) and 460–552 (REAE…PVLT). The segment covering 393-402 (QTQGTQSQGS) has biased composition (low complexity). Basic and acidic residues predominate over residues 484-500 (RRESKPEEPPPPKKPAL). Residue Ser-487 is modified to Phosphoserine. Composition is skewed to pro residues over residues 512 to 521 (PGPPRKPPGT) and 537 to 548 (VPAPAASPPPEG). The residue at position 543 (Ser-543) is a Phosphoserine. Position 594 is a phosphothreonine (Thr-594).

As to quaternary structure, component of the MLL-HCF complex, at least composed of KMT2A/MLL1, MEN1, ASH2L, RBBP5, DPY30, WDR5, HCFC1 and HCFC2. Component of the menin-associated histone methyltransferase complex, at least composed of KMT2B/MLL4, MEN1, ASH2L, RBBP5, DPY30 and WDR5. Interacts with POLR2B. Interacts with POLR2A phosphorylated at 'Ser-5', but not with the unphosphorylated, nor 'Ser-2' phosphorylated POLR2A forms. Interacts with FANCD2 and DBF4. Interacts with SMAD3, but not with SMAD2, nor SMAD4. Directly interacts with NFKB1, NFKB2 and RELA. Interacts with JUND (via MBM motif); inhibits the interaction of JUND with MAPK10 and the phosphorylation of JUND by MAP kinases MAPK8 and MAPK10. Interacts with KMT2A (via MBM motif). The KMT2A-MEN1 complex interacts with PSIP1 with a greater affinity as MEN1 enhances interaction of KMT2A with PSIP1.

The protein localises to the nucleus. Functionally, essential component of a MLL/SET1 histone methyltransferase (HMT) complex, a complex that specifically methylates 'Lys-4' of histone H3 (H3K4). Functions as a transcriptional regulator. Binds to the TERT promoter and represses telomerase expression. Plays a role in TGFB1-mediated inhibition of cell-proliferation, possibly regulating SMAD3 transcriptional activity. Represses JUND-mediated transcriptional activation on AP1 sites, as well as that mediated by NFKB subunit RELA. Positively regulates HOXC8 and HOXC6 gene expression. May be involved in normal hematopoiesis through the activation of HOXA9 expression. May be involved in DNA repair. The chain is Menin (MEN1) from Bos taurus (Bovine).